We begin with the raw amino-acid sequence, 616 residues long: Sialic acid TRAP transporter permease protein SiaT (616 aa).

A TRAP transporter small permease region spans residues 1 to 190 (MKYINKLEEW…RISNYIKLGS (190 aa)). The next 17 membrane-spanning stretches (helical) occupy residues 9–29 (EWLGGTLFIAIFGILIAQILS), 36–56 (PLIWSEELAKLLFVYVGMLGI), 83–103 (TNTFVQLLVFVCIFLFIHFGI), 117–137 (GGISEKWIFAALPVIAILMMF), 153–173 (YLPATFFIISAVILFAILFFA), 195–215 (IALLVWLIIMFIGVPVGWSLF), 244–264 (FPLLAVPFYILTGILMNTGGI), 288–308 (IGASLLFSGMSGSALADAGGL), 332–352 (ASCIIGPLVPPSIAMIIYGVI), 357–377 (IAKLFIAGFIPGVLITLALMA), 407–427 (FWAILTPLLIIGGIFSGLFSP), 431–451 (AIVAAAYSIIIGKFVYKELTL), 459–479 (IEAMAITGVVALMIMTVTFFG), 505–525 (VLVMINALLLFLGMFIDALAL), 527–547 (FLVLPMLIPIAMQFNIDLIFF), 552–572 (TLNMMIGILTPPMGMALFVVA), and 587–607 (LPFLIPVFVTLVLITIFPQII). The interval 191–616 (SSVYIALLVW…ITFVPNLLIP (426 aa)) is TRAP transporter large permease.

The protein in the N-terminal section; belongs to the TRAP transporter small permease family. This sequence in the C-terminal section; belongs to the TRAP transporter large permease family. As to quaternary structure, the complex comprises the extracytoplasmic solute receptor protein SiaP, and the fused transmembrane protein SiaT.

The protein resides in the cell inner membrane. In terms of biological role, part of the tripartite ATP-independent periplasmic (TRAP) transport system SiaPT involved in the uptake of sialic acid. The polypeptide is Sialic acid TRAP transporter permease protein SiaT (siaT) (Haemophilus influenzae (strain 86-028NP)).